The chain runs to 123 residues: Small ribosomal subunit protein uS12 (123 aa).

Asp-89 bears the 3-methylthioaspartic acid mark.

Belongs to the universal ribosomal protein uS12 family. As to quaternary structure, part of the 30S ribosomal subunit. Contacts proteins S8 and S17. May interact with IF1 in the 30S initiation complex.

Its function is as follows. With S4 and S5 plays an important role in translational accuracy. Interacts with and stabilizes bases of the 16S rRNA that are involved in tRNA selection in the A site and with the mRNA backbone. Located at the interface of the 30S and 50S subunits, it traverses the body of the 30S subunit contacting proteins on the other side and probably holding the rRNA structure together. The combined cluster of proteins S8, S12 and S17 appears to hold together the shoulder and platform of the 30S subunit. This chain is Small ribosomal subunit protein uS12, found in Trichlorobacter lovleyi (strain ATCC BAA-1151 / DSM 17278 / SZ) (Geobacter lovleyi).